Reading from the N-terminus, the 301-residue chain is Bifunctional protein FolD (301 aa).

NADP(+)-binding positions include 164 to 166, Ser191, and Ile232; that span reads GRS.

The protein belongs to the tetrahydrofolate dehydrogenase/cyclohydrolase family. Homodimer.

The enzyme catalyses (6R)-5,10-methylene-5,6,7,8-tetrahydrofolate + NADP(+) = (6R)-5,10-methenyltetrahydrofolate + NADPH. It carries out the reaction (6R)-5,10-methenyltetrahydrofolate + H2O = (6R)-10-formyltetrahydrofolate + H(+). Its pathway is one-carbon metabolism; tetrahydrofolate interconversion. Functionally, catalyzes the oxidation of 5,10-methylenetetrahydrofolate to 5,10-methenyltetrahydrofolate and then the hydrolysis of 5,10-methenyltetrahydrofolate to 10-formyltetrahydrofolate. This is Bifunctional protein FolD from Borrelia garinii subsp. bavariensis (strain ATCC BAA-2496 / DSM 23469 / PBi) (Borreliella bavariensis).